Reading from the N-terminus, the 247-residue chain is Mast cell protease 2 (247 aa).

An N-terminal signal peptide occupies residues 1–19 (MHLLALHLLLFLLGSRAKA). Positions 20–21 (GE) are cleaved as a propeptide — activation peptide. The Peptidase S1 domain occupies 22-245 (IIGGTECKPH…YRPWINKILR (224 aa)). A disulfide bridge links Cys-51 with Cys-67. Catalysis depends on His-66, which acts as the Charge relay system. Asn-80 carries an N-linked (GlcNAc...) asparagine glycan. The Charge relay system role is filled by Asp-110. Cystine bridges form between Cys-144-Cys-209 and Cys-175-Cys-188. Ser-203 acts as the Charge relay system in catalysis.

It belongs to the peptidase S1 family. Granzyme subfamily.

The chain is Mast cell protease 2 from Meriones unguiculatus (Mongolian jird).